We begin with the raw amino-acid sequence, 291 residues long: Nucleotide-binding protein EUBREC_0697 (291 aa).

8 to 15 (GMSGAGKS) lines the ATP pocket. 59–62 (DVRN) provides a ligand contact to GTP.

This sequence belongs to the RapZ-like family.

Functionally, displays ATPase and GTPase activities. The polypeptide is Nucleotide-binding protein EUBREC_0697 (Agathobacter rectalis (strain ATCC 33656 / DSM 3377 / JCM 17463 / KCTC 5835 / VPI 0990) (Eubacterium rectale)).